The following is a 117-amino-acid chain: MANPQRAGRLAQEVQRDVTDLLLKRINDPRVQDVTVTSVELSGDLQIATIYYSILSDLASDGQKAQAGLEAASGLIRKELGARLTVYKTPELKFVRDQSVQYGNHIEDLIRKLHADN.

Belongs to the RbfA family. In terms of assembly, monomer. Binds 30S ribosomal subunits, but not 50S ribosomal subunits or 70S ribosomes.

The protein localises to the cytoplasm. In terms of biological role, one of several proteins that assist in the late maturation steps of the functional core of the 30S ribosomal subunit. Associates with free 30S ribosomal subunits (but not with 30S subunits that are part of 70S ribosomes or polysomes). Required for efficient processing of 16S rRNA. May interact with the 5'-terminal helix region of 16S rRNA. This is Ribosome-binding factor A from Leuconostoc citreum (strain KM20).